The primary structure comprises 342 residues: Protein-glutamate methylesterase/protein-glutamine glutaminase 3 (342 aa).

The Response regulatory domain maps to 3 to 120 (RVLVVEDMPT…SPGFADDARR (118 aa)). The residue at position 54 (aspartate 54) is a 4-aspartylphosphate. Positions 152 to 342 (DVPRGRVVAV…ADRLALWLRR (191 aa)) constitute a CheB-type methylesterase domain. Active-site residues include serine 164, histidine 191, and aspartate 285.

It belongs to the CheB family. Phosphorylated by CheA. Phosphorylation of the N-terminal regulatory domain activates the methylesterase activity.

It localises to the cytoplasm. The enzyme catalyses [protein]-L-glutamate 5-O-methyl ester + H2O = L-glutamyl-[protein] + methanol + H(+). The catalysed reaction is L-glutaminyl-[protein] + H2O = L-glutamyl-[protein] + NH4(+). Functionally, involved in chemotaxis. Part of a chemotaxis signal transduction system that modulates chemotaxis in response to various stimuli. Catalyzes the demethylation of specific methylglutamate residues introduced into the chemoreceptors (methyl-accepting chemotaxis proteins or MCP) by CheR. Also mediates the irreversible deamidation of specific glutamine residues to glutamic acid. In Anaeromyxobacter dehalogenans (strain 2CP-C), this protein is Protein-glutamate methylesterase/protein-glutamine glutaminase 3.